The primary structure comprises 811 residues: Lysine-specific histone demethylase 1 homolog 3 (811 aa).

Pro residues predominate over residues 1 to 10 (MSDQPPPYTP). The tract at residues 1–79 (MSDQPPPYTP…PSAQPPPRAS (79 aa)) is disordered. Residues 44-55 (NKRKRTGFRRKL) are compositionally biased toward basic residues. The segment covering 56-71 (PSGSPAAPVAVAASPS) has biased composition (low complexity). Residues 88–189 (NREPTAEAVT…FGVAPAIKER (102 aa)) enclose the SWIRM domain. Residues E227, R229, R235, and E609 each coordinate FAD. A disordered region spans residues 790–811 (RNSSRTKTRPSKLKIGIPKSKS).

It belongs to the flavin monoamine oxidase family. FAD serves as cofactor.

Functionally, probable histone demethylase. In Oryza sativa subsp. indica (Rice), this protein is Lysine-specific histone demethylase 1 homolog 3.